The following is a 253-amino-acid chain: Prolactin-7A2 (253 aa).

The first 30 residues, 1-30 (MSFSFSQPCPSGALLLVVVSSLLLWENVAS), serve as a signal peptide directing secretion. Residues asparagine 36, asparagine 103, and asparagine 135 are each glycosylated (N-linked (GlcNAc...) asparagine). Cystine bridges form between cysteine 101–cysteine 218 and cysteine 235–cysteine 244.

It belongs to the somatotropin/prolactin family. In terms of tissue distribution, expression restricted to the placental tissue. Expressed only in the spongiotrophoblasts.

Its subcellular location is the secreted. In Mus musculus (Mouse), this protein is Prolactin-7A2 (Prl7a2).